We begin with the raw amino-acid sequence, 404 residues long: G-protein coupled receptor 182 (404 aa).

The Extracellular portion of the chain corresponds to 1–57; that stretch reads MSVKPSWGPGPSEGVTAVPTSDLGEIHNWTELLDLFNHTLSECHVELSQSTKRVVLF. N-linked (GlcNAc...) asparagine glycans are attached at residues Asn-28 and Asn-37. The chain crosses the membrane as a helical span at residues 58–79; the sequence is ALYLAMFVVGLVENLLVICVNW. Residues 80–90 lie on the Cytoplasmic side of the membrane; sequence RGSGRAGLMNL. A helical membrane pass occupies residues 91-113; that stretch reads YILNMAIADLGIVLSLPVWMLEV. At 114 to 127 the chain is on the extracellular side; sequence TLDYTWLWGSFSCR. A disulfide bond links Cys-126 and Cys-202. Residues 128 to 149 form a helical membrane-spanning segment; the sequence is FTHYFYFVNMYSSIFFLVCLSV. The Cytoplasmic segment spans residues 150-170; it reads DRYVTLTSASPSWQRYQHRVR. A helical membrane pass occupies residues 171 to 193; that stretch reads RAMCAGIWVLSAIIPLPEVVHIQ. The Extracellular portion of the chain corresponds to 194–217; the sequence is LVEGPEPMCLFMAPFETYSTWALA. Residues 218 to 239 traverse the membrane as a helical segment; sequence VALSTTILGFLLPFPLITVFNV. Over 240–258 the chain is Cytoplasmic; it reads LTACRLRQPGQPKSRRHCL. The helical transmembrane segment at 259–280 threads the bilayer; it reads LLCAYVAVFVMCWLPYHVTLLL. Topologically, residues 281-299 are extracellular; the sequence is LTLHGTHISLHCHLVHLLY. Residues 300 to 320 form a helical membrane-spanning segment; it reads FFYDVIDCFSMLHCVINPILY. The Cytoplasmic segment spans residues 321-404; the sequence is NFLSPHFRGR…ISPTQPLTPS (84 aa).

It belongs to the G-protein coupled receptor 1 family. In terms of tissue distribution, highly expressed in heart, skeletal muscle, immune system, adrenal gland and liver.

It localises to the cell membrane. Functionally, orphan receptor. This chain is G-protein coupled receptor 182 (GPR182), found in Homo sapiens (Human).